We begin with the raw amino-acid sequence, 595 residues long: Merlin (595 aa).

Position 13 is a phosphoserine (Ser-13). The region spanning 22 to 311 (FTVRIVTMDA…GNHDLFMRRR (290 aa)) is the FERM domain. Ser-518 is modified (phosphoserine; by PAK).

In terms of assembly, interacts with NHERF1, HGS and AGAP2. Interacts with SGSM3. Interacts (via FERM domain) with MPP1. Interacts with LAYN and WWC1. Interacts with the CUL4A-RBX1-DDB1-VprBP/DCAF1 E3 ubiquitin-protein ligase complex. The unphosphorylated form interacts (via FERM domain) with VPRBP/DCAF1. Interacts (via FERM domain) with NOP53; the interaction is direct. Interacts with SCHIP1; the interaction is direct. In terms of processing, phosphorylation of Ser-518 inhibits nuclear localization by disrupting the intramolecular association of the FERM domain with the C-terminal tail. Ubiquitinated by the CUL4A-RBX1-DDB1-DCAF1/VprBP E3 ubiquitin-protein ligase complex for ubiquitination and subsequent proteasome-dependent degradation. Post-translationally, phosphorylation of Ser-518 inhibits nuclear localization by disrupting the intramolecular association of the FERM domain with the C-terminal tail. The dephosphorylation of Ser-518 favors the interaction with NOP53.

It is found in the cell membrane. The protein localises to the cell projection. Its subcellular location is the cytoplasm. The protein resides in the cytoskeleton. It localises to the nucleus. Functionally, probable regulator of the Hippo/SWH (Sav/Wts/Hpo) signaling pathway, a signaling pathway that plays a pivotal role in tumor suppression by restricting proliferation and promoting apoptosis. Along with WWC1 can synergistically induce the phosphorylation of LATS1 and LATS2 and can probably function in the regulation of the Hippo/SWH (Sav/Wts/Hpo) signaling pathway. May act as a membrane stabilizing protein. May inhibit PI3 kinase by binding to AGAP2 and impairing its stimulating activity. Suppresses cell proliferation and tumorigenesis by inhibiting the CUL4A-RBX1-DDB1-VprBP/DCAF1 E3 ubiquitin-protein ligase complex. This chain is Merlin (NF2), found in Papio anubis (Olive baboon).